A 288-amino-acid polypeptide reads, in one-letter code: Bifunctional protein FolD 2 (288 aa).

Residues 166–168 (GRS) and Ser-191 contribute to the NADP(+) site.

This sequence belongs to the tetrahydrofolate dehydrogenase/cyclohydrolase family. In terms of assembly, homodimer.

The enzyme catalyses (6R)-5,10-methylene-5,6,7,8-tetrahydrofolate + NADP(+) = (6R)-5,10-methenyltetrahydrofolate + NADPH. It catalyses the reaction (6R)-5,10-methenyltetrahydrofolate + H2O = (6R)-10-formyltetrahydrofolate + H(+). Its pathway is one-carbon metabolism; tetrahydrofolate interconversion. Its function is as follows. Catalyzes the oxidation of 5,10-methylenetetrahydrofolate to 5,10-methenyltetrahydrofolate and then the hydrolysis of 5,10-methenyltetrahydrofolate to 10-formyltetrahydrofolate. The sequence is that of Bifunctional protein FolD 2 from Frankia casuarinae (strain DSM 45818 / CECT 9043 / HFP020203 / CcI3).